We begin with the raw amino-acid sequence, 376 residues long: ORC1-type DNA replication protein 2 (376 aa).

Residues 73 to 77 (TGKTS), Tyr209, and Arg221 contribute to the ATP site.

It belongs to the CDC6/cdc18 family.

In terms of biological role, involved in regulation of DNA replication. This chain is ORC1-type DNA replication protein 2 (cdc6-2), found in Archaeoglobus fulgidus (strain ATCC 49558 / DSM 4304 / JCM 9628 / NBRC 100126 / VC-16).